A 195-amino-acid polypeptide reads, in one-letter code: Imidazoleglycerol-phosphate dehydratase (195 aa).

Belongs to the imidazoleglycerol-phosphate dehydratase family.

Its subcellular location is the cytoplasm. It carries out the reaction D-erythro-1-(imidazol-4-yl)glycerol 3-phosphate = 3-(imidazol-4-yl)-2-oxopropyl phosphate + H2O. The protein operates within amino-acid biosynthesis; L-histidine biosynthesis; L-histidine from 5-phospho-alpha-D-ribose 1-diphosphate: step 6/9. The sequence is that of Imidazoleglycerol-phosphate dehydratase from Burkholderia ambifaria (strain MC40-6).